The following is a 297-amino-acid chain: Protein-methionine-sulfoxide reductase catalytic subunit MsrP (297 aa).

The segment at residues 1-35 is a signal peptide (tat-type signal); that stretch reads MLITPEKLYKQRRNFLKLGAGALISSSVLASKLSA. Residues 62 to 63, Cys-116, Thr-151, Asn-201, Arg-206, and 217 to 219 each bind Mo-molybdopterin; these read YE and SIK.

The protein belongs to the MsrP family. Heterodimer of a catalytic subunit (MsrP) and a heme-binding subunit (MsrQ). Requires Mo-molybdopterin as cofactor. Predicted to be exported by the Tat system. The position of the signal peptide cleavage has not been experimentally proven.

It localises to the periplasm. It carries out the reaction L-methionyl-[protein] + a quinone + H2O = L-methionyl-(S)-S-oxide-[protein] + a quinol. The catalysed reaction is L-methionyl-[protein] + a quinone + H2O = L-methionyl-(R)-S-oxide-[protein] + a quinol. Its function is as follows. Part of the MsrPQ system that repairs oxidized periplasmic proteins containing methionine sulfoxide residues (Met-O), using respiratory chain electrons. Thus protects these proteins from oxidative-stress damage caused by reactive species of oxygen and chlorine generated by the host defense mechanisms. MsrPQ is essential for the maintenance of envelope integrity under bleach stress, rescuing a wide series of structurally unrelated periplasmic proteins from methionine oxidation. The catalytic subunit MsrP is non-stereospecific, being able to reduce both (R-) and (S-) diastereoisomers of methionine sulfoxide. In Campylobacter jejuni subsp. jejuni serotype O:2 (strain ATCC 700819 / NCTC 11168), this protein is Protein-methionine-sulfoxide reductase catalytic subunit MsrP.